Reading from the N-terminus, the 343-residue chain is N(4)-bis(aminopropyl)spermidine synthase (343 aa).

The protein belongs to the branched-chain polyamine synthase family.

The protein localises to the cytoplasm. It carries out the reaction 2 S-adenosyl 3-(methylsulfanyl)propylamine + spermidine = N(4)-bis(aminopropyl)spermidine + 2 S-methyl-5'-thioadenosine + 2 H(+). Its pathway is amine and polyamine biosynthesis. In terms of biological role, involved in the biosynthesis of branched-chain polyamines, which support the growth of thermophiles under high-temperature conditions. Catalyzes the sequential condensation of spermidine with the aminopropyl groups of decarboxylated S-adenosylmethionines to produce N(4)-bis(aminopropyl)spermidine via N(4)-aminopropylspermidine. The polypeptide is N(4)-bis(aminopropyl)spermidine synthase (Thermus thermophilus).